We begin with the raw amino-acid sequence, 338 residues long: Heat-inducible transcription repressor HrcA (338 aa).

This sequence belongs to the HrcA family.

Functionally, negative regulator of class I heat shock genes (grpE-dnaK-dnaJ and groELS operons). Prevents heat-shock induction of these operons. The protein is Heat-inducible transcription repressor HrcA of Bacillus cereus (strain AH820).